Consider the following 424-residue polypeptide: Lactate racemase (424 aa).

72 to 75 (DHTR) provides a ligand contact to Ni(II)-pyridinium-3,5-bisthiocarboxylate mononucleotide. Active-site proton donor/acceptor residues include His-108 and His-174. Residues Lys-184 and His-200 each contribute to the Ni(II)-pyridinium-3,5-bisthiocarboxylate mononucleotide site. Substrate-binding residues include Gln-295 and Lys-298.

Belongs to the lactate racemase family. Homodimer. Ni(II)-pyridinium-3,5-bisthiocarboxylate mononucleotide serves as cofactor.

The catalysed reaction is (S)-lactate = (R)-lactate. With respect to regulation, activation of the apo-enzyme requires the three accessory proteins LarB, LarE and LarC, that are involved in the biosynthesis of the nickel-pincer cofactor of LarA. Inhibited by sulfite that behaves as a mixed inhibitor. Functionally, catalyzes the interconversion between the D- and L-isomers of lactate. May act as a rescue enzyme to ensure D-lactate production in physiological conditions where its production by the D-lactate dehydrogenase LdhD is not sufficient. D-Lactate is absolutely required for growth of L.plantarum and is an essential component of the cell wall peptidoglycan in this species, where it is incorporated as the last residue of the muramoyl-pentadepsipeptide peptidoglycan precursor; its incorporation confers high level of vancomycin resistance. The polypeptide is Lactate racemase (Lactiplantibacillus plantarum (strain ATCC BAA-793 / NCIMB 8826 / WCFS1) (Lactobacillus plantarum)).